We begin with the raw amino-acid sequence, 151 residues long: 3-hydroxyacyl-[acyl-carrier-protein] dehydratase FabZ (151 aa).

Residue histidine 54 is part of the active site.

The protein belongs to the thioester dehydratase family. FabZ subfamily.

The protein localises to the cytoplasm. It carries out the reaction a (3R)-hydroxyacyl-[ACP] = a (2E)-enoyl-[ACP] + H2O. Its function is as follows. Involved in unsaturated fatty acids biosynthesis. Catalyzes the dehydration of short chain beta-hydroxyacyl-ACPs and long chain saturated and unsaturated beta-hydroxyacyl-ACPs. This chain is 3-hydroxyacyl-[acyl-carrier-protein] dehydratase FabZ, found in Cronobacter sakazakii (strain ATCC BAA-894) (Enterobacter sakazakii).